Reading from the N-terminus, the 513-residue chain is GMP synthase [glutamine-hydrolyzing] (513 aa).

The Glutamine amidotransferase type-1 domain occupies 9–198 (LILVLDFGSQ…IREICKCTGE (190 aa)). Cys-86 functions as the Nucleophile in the catalytic mechanism. Residues His-172 and Glu-174 contribute to the active site. The GMPS ATP-PPase domain maps to 199 to 388 (WTMENFIEIE…LGIPEHLVWR (190 aa)). 226–232 (SGGVDSS) contributes to the ATP binding site.

As to quaternary structure, homodimer.

It carries out the reaction XMP + L-glutamine + ATP + H2O = GMP + L-glutamate + AMP + diphosphate + 2 H(+). It participates in purine metabolism; GMP biosynthesis; GMP from XMP (L-Gln route): step 1/1. Its function is as follows. Catalyzes the synthesis of GMP from XMP. The chain is GMP synthase [glutamine-hydrolyzing] from Macrococcus caseolyticus (strain JCSC5402) (Macrococcoides caseolyticum).